The following is a 34-amino-acid chain: Beta/mu-theraphotoxin-Pe1a (34 aa).

3 disulfide bridges follow: Cys2-Cys16, Cys9-Cys21, and Cys15-Cys28.

It belongs to the neurotoxin 10 (Hwtx-1) family. 54 (ProTx-1) subfamily. In terms of tissue distribution, expressed by the venom gland.

It localises to the secreted. Its function is as follows. Ion channel impairing toxin that inhibits voltage-gated sodium channels. The recombinantly expressed toxin shows a weak activity against Nav1.7/SCN9A (25% inhibition at 10 uM), and shifts the voltage dependence of channel activation to more depolarized potentials. This chain is Beta/mu-theraphotoxin-Pe1a, found in Phormingochilus everetti (Malaysian purple earth tiger tarantula).